A 260-amino-acid polypeptide reads, in one-letter code: Proteasome subunit alpha (260 aa).

The interval 231–260 (LLPEDFSPGQTEGGGDPAPESGDSKDAKDN) is disordered.

The protein belongs to the peptidase T1A family. As to quaternary structure, the 20S proteasome core is composed of 14 alpha and 14 beta subunits that assemble into four stacked heptameric rings, resulting in a barrel-shaped structure. The two inner rings, each composed of seven catalytic beta subunits, are sandwiched by two outer rings, each composed of seven alpha subunits. The catalytic chamber with the active sites is on the inside of the barrel. Has a gated structure, the ends of the cylinder being occluded by the N-termini of the alpha-subunits. Is capped by the proteasome-associated ATPase, ARC.

The protein localises to the cytoplasm. The protein operates within protein degradation; proteasomal Pup-dependent pathway. With respect to regulation, the formation of the proteasomal ATPase ARC-20S proteasome complex, likely via the docking of the C-termini of ARC into the intersubunit pockets in the alpha-rings, may trigger opening of the gate for substrate entry. Interconversion between the open-gate and close-gate conformations leads to a dynamic regulation of the 20S proteasome proteolysis activity. Its function is as follows. Component of the proteasome core, a large protease complex with broad specificity involved in protein degradation. In Mycobacteroides abscessus (strain ATCC 19977 / DSM 44196 / CCUG 20993 / CIP 104536 / JCM 13569 / NCTC 13031 / TMC 1543 / L948) (Mycobacterium abscessus), this protein is Proteasome subunit alpha.